The following is a 90-amino-acid chain: Protein LIM1 (90 aa).

A signal peptide spans 1–26 (MASMKSLATAILVVLLLAALSREGRS). Cystine bridges form between C29/C66, C39/C55, C56/C81, and C68/C88.

The protein belongs to the A9/FIL1 family.

The protein resides in the secreted. The sequence is that of Protein LIM1 (LIM1) from Lilium longiflorum (Trumpet lily).